Consider the following 465-residue polypeptide: MLLLWILSLFLETVAGGEVCFDRLGCFSDNKPWAGTSERPRKGLPWDPSAINVRFLLYTNENPNNYQRITADSSVIRSSDFKTDRKTRFIIHGFIDKGEENWLADLCKALFQVESVNCICVDWRGGSRTLYSQASQNIQVVGAEVAYLINFLQSQLDYPPSSVHIIGHSLGSHAAGEAGRRTNGAIGRITGLDPAEPYFQYTPEIVRLDPSDAQFVDVIHTDGNPIIPNLGFGMSQTVGHLDFFPNGGLQMPGCQKNILSQIVDIDGIWEGTRDFAACNHLRSYKYYIDSITNPKGFAGFSCDSYSSFSSNKCFPCATGECPQMGHYADKFPGKTKENFQNFYLNTGDKSNFSRWRYRIAVTLSGQKVTGHVLVSLFGDAGNTKQYEIYRGSLKPGNNHSNEIDSDVDVGDLQKVKFIWYNNVINITLPKVGASRITVTRSDGRVFDFCSQDTVREEVLLTLQPC.

A signal peptide spans 1-16 (MLLLWILSLFLETVAG). 2 disulfide bridges follow: cysteine 20–cysteine 26 and cysteine 107–cysteine 118. Serine 169 acts as the Nucleophile in catalysis. Residue aspartate 193 is the Charge relay system of the active site. The Ca(2+) site is built by glutamate 204, arginine 207, aspartate 209, and aspartate 212. Cysteine 254 and cysteine 278 are joined by a disulfide. The active-site Charge relay system is histidine 280. Intrachain disulfides connect cysteine 302–cysteine 313 and cysteine 316–cysteine 321. Residues asparagine 351, asparagine 398, and asparagine 425 are each glycosylated (N-linked (GlcNAc...) asparagine). The PLAT domain occupies 355 to 465 (WRYRIAVTLS…EEVLLTLQPC (111 aa)). An intrachain disulfide couples cysteine 449 to cysteine 465.

The protein belongs to the AB hydrolase superfamily. Lipase family. Forms a 1:1 stoichiometric complex with (pro)colipase/CLPS.

It is found in the secreted. It catalyses the reaction a triacylglycerol + H2O = a diacylglycerol + a fatty acid + H(+). The enzyme catalyses 1,2,3-tributanoylglycerol + H2O = dibutanoylglycerol + butanoate + H(+). It carries out the reaction 1,2,3-tri-(9Z-octadecenoyl)-glycerol + H2O = di-(9Z)-octadecenoylglycerol + (9Z)-octadecenoate + H(+). The catalysed reaction is all-trans-retinyl hexadecanoate + H2O = all-trans-retinol + hexadecanoate + H(+). It catalyses the reaction 1,2-di-(9Z-octadecenoyl)-glycerol + H2O = (9Z-octadecenoyl)-glycerol + (9Z)-octadecenoate + H(+). Its activity is regulated as follows. Inhibited by bile salts, is reactivated by (pro)colipase/CLPS. Functionally, plays an important role in fat metabolism. It preferentially splits the esters of long-chain fatty acids at positions 1 and 3, producing mainly 2-monoacylglycerol and free fatty acids, and shows considerably higher activity against insoluble emulsified substrates than against soluble ones. The polypeptide is Pancreatic triacylglycerol lipase (PNLIP) (Cavia porcellus (Guinea pig)).